The chain runs to 456 residues: Glutamate--tRNA ligase 2 (456 aa).

The short motif at 8-18 (PSPTGYIHIGN) is the 'HIGH' region element. A 'KMSKS' region motif is present at residues 249-253 (GLSKR). Position 252 (Lys-252) interacts with ATP.

This sequence belongs to the class-I aminoacyl-tRNA synthetase family. Glutamate--tRNA ligase type 1 subfamily. In terms of assembly, monomer.

The protein resides in the cytoplasm. It carries out the reaction tRNA(Glu) + L-glutamate + ATP = L-glutamyl-tRNA(Glu) + AMP + diphosphate. Catalyzes the attachment of glutamate to tRNA(Glu) in a two-step reaction: glutamate is first activated by ATP to form Glu-AMP and then transferred to the acceptor end of tRNA(Glu). The sequence is that of Glutamate--tRNA ligase 2 from Bartonella bacilliformis (strain ATCC 35685 / KC583 / Herrer 020/F12,63).